A 91-amino-acid polypeptide reads, in one-letter code: Putative regulatory protein DSY2730 (91 aa).

The protein belongs to the RemA family.

The protein is Putative regulatory protein DSY2730 of Desulfitobacterium hafniense (strain Y51).